The chain runs to 102 residues: Large ribosomal subunit protein bL28 (102 aa).

A disordered region spans residues 1 to 20 (MSRRCELTAKGPQVGHKVSH).

Belongs to the bacterial ribosomal protein bL28 family.

The chain is Large ribosomal subunit protein bL28 from Bradyrhizobium sp. (strain ORS 278).